The chain runs to 89 residues: Large ribosomal subunit protein bL27 (89 aa).

Positions 1–21 (MAHKKAGGSSRNGRDSAGRRL) are disordered.

Belongs to the bacterial ribosomal protein bL27 family.

The polypeptide is Large ribosomal subunit protein bL27 (Novosphingobium aromaticivorans (strain ATCC 700278 / DSM 12444 / CCUG 56034 / CIP 105152 / NBRC 16084 / F199)).